We begin with the raw amino-acid sequence, 307 residues long: Putative ankyrin repeat protein L59 (307 aa).

ANK repeat units follow at residues 41–67 (LFNK…NLEK), 68–97 (IDNK…DTTN), 98–127 (HNYS…DIRA), 129–157 (DDEA…DVRN), 158–187 (RNDF…DIRT), 188–217 (DDDY…NIHA), 219–247 (GDSA…DIRI), 248–277 (DNDY…DIGA), and 279–307 (NNYA…LKLY).

The chain is Putative ankyrin repeat protein L59 from Acanthamoeba polyphaga (Amoeba).